Here is a 245-residue protein sequence, read N- to C-terminus: Putative outer membrane protein RBE_0022 (245 aa).

Positions 1-23 (MIRMSKRLGVILFVSCISINSFA) are cleaved as a signal peptide.

It belongs to the OmpW/AlkL family.

Its subcellular location is the cell outer membrane. The protein is Putative outer membrane protein RBE_0022 of Rickettsia bellii (strain RML369-C).